Consider the following 520-residue polypeptide: Sodium-dependent dicarboxylate transporter SdcS (520 aa).

The next 14 helical transmembrane spans lie at 30–50 (AGQLIGLILGPLLFLLTLLFF), 55–75 (LPWKGVYVLAITLWIATWWIT), 77–97 (AIPIAATSLLPIVLLPLGHIL), 104–124 (SEYGNDIIFLFLGGFILAIAM), 160–180 (SMFVSNTAAVMIMIPIGLAII), 207–227 (IGYAGTIGGLGTLIGTPPLII), 242–262 (FAKWMIVGIPTVIVLLGITWL), 298–318 (KVVQTIFVLASLLWITREFLL), 323–343 (VTSSVADGTIAIFISILLFII), 362–382 (ELPWGVLILFGGGLALAKGIS), 399–419 (GVSPILIVIVITIFVLFLTEV), 428–448 (MILPILATLSVAVGVHPLLLM), 452–472 (AMAANCAYMLPVGTPPNAIIF), and 491–511 (LISAIIIILVVYYVMPIVLGI).

It belongs to the SLC13A/DASS transporter (TC 2.A.47) family. NADC subfamily.

The protein resides in the cell membrane. Its function is as follows. Mediates the transport of the dicarboxylates fumarate, malate, and succinate across the cytoplasmic membrane via a Na(+)-electrochemical gradient. This is Sodium-dependent dicarboxylate transporter SdcS (sdcS) from Staphylococcus aureus (strain NCTC 8325 / PS 47).